A 107-amino-acid chain; its full sequence is MAESHRLYVKGKHISYQRSKSVTNPNVSLIQIEGVASPKDAKFYLGKRIAYVYRAPKEIRGSKIRVIWGKVTRTHGNNGLVRANFKKNLPPKTFGASVRIMLYPSNI.

The protein belongs to the eukaryotic ribosomal protein eL33 family. As to quaternary structure, component of the large ribosomal subunit. Mature ribosomes consist of a small (40S) and a large (60S) subunit. The 40S subunit contains about 32 different proteins and 1 molecule of RNA (18S). The 60S subunit contains 45 different proteins and 3 molecules of RNA (25S, 5.8S and 5S).

The protein resides in the cytoplasm. In terms of biological role, component of the ribosome, a large ribonucleoprotein complex responsible for the synthesis of proteins in the cell. The small ribosomal subunit (SSU) binds messenger RNAs (mRNAs) and translates the encoded message by selecting cognate aminoacyl-transfer RNA (tRNA) molecules. The large subunit (LSU) contains the ribosomal catalytic site termed the peptidyl transferase center (PTC), which catalyzes the formation of peptide bonds, thereby polymerizing the amino acids delivered by tRNAs into a polypeptide chain. The nascent polypeptides leave the ribosome through a tunnel in the LSU and interact with protein factors that function in enzymatic processing, targeting, and the membrane insertion of nascent chains at the exit of the ribosomal tunnel. This is Large ribosomal subunit protein eL33 from Candida albicans (strain SC5314 / ATCC MYA-2876) (Yeast).